Consider the following 462-residue polypeptide: MRRKAVLLTVVLSLSGGSAQAMGLLDAWELALRNDAQLRAAGFERDAGQEEVAIGRAGLLPSLQYTYGANYSHSKVTQRDRTLNNTTKRDYDNYVSTLTLRQPLLDYAAWARYQQGVTRKLMADQRFRDRSQDLMVRLYQSWSEALLAQEKLMLLDAQRRAYQEQLALNRRLLAAGEGTQTDLRETEARYTVTEAQRIEQEDTLDAAMTDLENMMGSPLQIQDLSPLALDTLPDNVTENRSLSQWRELTVRHNAKLAVQRENVDYSRYEIERNRAGHLPTLDLVASTRNSLSESEYNYNQKYDTQTVGLQVRVPLYSGGAVSASMRQAAAEYQQSQAELDNQTRQTFAELRRQFNLCANGAAKIRAWQMSVAAAEEAIRATRQSVAGGERINLDVLMAEQEWYNARRELTEVKYRWLQAWLNLRYTAGTLNEQDMMQLAAWFQSAPVINKTGINAATGNKTN.

An N-terminal signal peptide occupies residues methionine 1–glycine 23.

Belongs to the outer membrane factor (OMF) (TC 1.B.17) family.

The protein localises to the cell outer membrane. Its function is as follows. Involved in the secretion of proteases A, B, C and G. This chain is Proteases secretion protein PrtF (prtF), found in Dickeya chrysanthemi (Pectobacterium chrysanthemi).